A 1705-amino-acid polypeptide reads, in one-letter code: Rho guanine nucleotide exchange factor 28 (1705 aa).

Disordered regions lie at residues 287-316 (RPEE…SAAE) and 473-524 (KKRS…ETNT). Phosphoserine is present on residues serine 313 and serine 478. The segment covering 501-510 (PGSQSSSRTG) has biased composition (polar residues). A Phosphoserine modification is found at serine 624. The disordered stretch occupies residues 630–649 (MTSPRNKSKTKSKDAKDKEK). The segment covering 640–649 (KSKDAKDKEK) has biased composition (basic and acidic residues). The Phorbol-ester/DAG-type zinc finger occupies 652–699 (RHQFAPGTFSGVLQCLVCDKTLLGKESLQCSNCNANVHKGCKDAAPAC). Polar residues-rich tracts occupy residues 710 to 721 (NKPQTILGNSSF) and 759 to 775 (VPGT…TSLE). The segment at 710-800 (NKPQTILGNS…ELLQSMGSSP (91 aa)) is disordered. The span at 777 to 791 (ESDHNSCRSRSHSDE) shows a compositional bias: basic and acidic residues. The DH domain occupies 849 to 1044 (KRQDVIFELM…KDMIATVDLK (196 aa)). The 103-residue stretch at 1086–1188 (TLLYDGLVYW…WMRRIQQAVE (103 aa)) folds into the PH domain. The segment at 1187–1207 (VESCPEEKGGRTSESDEDKRK) is disordered. Residues 1191-1207 (PEEKGGRTSESDEDKRK) are compositionally biased toward basic and acidic residues. Residues 1295 to 1304 (AVSQSCEDSC) form an interaction with PTK2/FAK1; required for regulation of axonal branching and synapse formation region. Positions 1312–1339 (TLSSHDVPGSPTASLVTGGREGRGCSDV) are disordered. The mediates cytoplasmic retention and interaction with YWHAH stretch occupies residues 1372–1383 (IIQAIQNLTRLL). The segment at 1425–1705 (QKSRDADRQH…DGAKENIVYL (281 aa)) is interaction with microtubules. A coiled-coil region spans residues 1488 to 1525 (RSRGELDLQLQEYQHSLERLREGQRLVEREQARMRAQQ). An RNA-binding region spans residues 1496–1527 (QLQEYQHSLERLREGQRLVEREQARMRAQQSL). Serine 1538 is modified (phosphoserine). The segment at 1566-1579 (FINEALVQMSFNTF) is mediates cytoplasmic retention and interaction with MAPK8IP1. The interval 1638-1705 (PFHESSKDSC…DGAKENIVYL (68 aa)) is disordered. Over residues 1641–1655 (ESSKDSCKNDLDTSH) the composition is skewed to basic and acidic residues. Polar residues predominate over residues 1656 to 1669 (TESPTPHDSNSHRP). Residues 1688 to 1699 (TRQDGETGDGAK) are compositionally biased toward basic and acidic residues.

As to quaternary structure, homooligomer; forms cytoplasmic aggregates. Forms a complex with MAPK8 and MAPK8IP1. Interacts with RHOA. Interacts with microtubules. Interacts with YWHAE and YWHAH. Interacts with PTK2/FAK1. Interacts with NEFL. Interacts with CTNND2; prevents interaction with RHOA. Phosphorylated on tyrosine upon stimulation of cells by laminin.

It is found in the cytoplasm. Its subcellular location is the cell membrane. Functionally, functions as a RHOA-specific guanine nucleotide exchange factor regulating signaling pathways downstream of integrins and growth factor receptors. Functions in axonal branching, synapse formation and dendritic morphogenesis. Also functions in focal adhesion formation, cell motility and B-lymphocytes activation. May regulate NEFL expression and aggregation and play a role in apoptosis. This Homo sapiens (Human) protein is Rho guanine nucleotide exchange factor 28 (ARHGEF28).